The primary structure comprises 57 residues: uncharacterized protein (57 aa).

Functionally, proetin of unknown function whose overexpression causes growth inhibition. Overexpression increases the expression of ergosterol synthesis genes. This is an uncharacterized protein from Saccharomyces cerevisiae (strain ATCC 204508 / S288c) (Baker's yeast).